A 408-amino-acid polypeptide reads, in one-letter code: Lipoate--protein ligase 1 (408 aa).

A mitochondrion-targeting transit peptide spans 1–18 (MKRIFRLVRRCHYSTEKR). A BPL/LPL catalytic domain is found at 60-242 (KFNEPILFLW…EFTKFYEQNY (183 aa)). Arg102, Gly107, and Tyr110 together coordinate ATP. Gly107 lines the (R)-lipoate pocket. Asp153 contributes to the Mg(2+) binding site. ATP is bound at residue Lys160. Lys160 contacts (R)-lipoate.

This sequence belongs to the LplA family.

It is found in the mitochondrion. It carries out the reaction L-lysyl-[lipoyl-carrier protein] + (R)-lipoate + ATP = N(6)-[(R)-lipoyl]-L-lysyl-[lipoyl-carrier protein] + AMP + diphosphate + H(+). It catalyses the reaction (R)-dihydrolipoate + L-lysyl-[lipoyl-carrier protein] + ATP = N(6)-[(R)-dihydrolipoyl]-L-lysyl-[lipoyl-carrier protein] + AMP + diphosphate + H(+). The enzyme catalyses (R)-dihydrolipoate + ATP + H(+) = N(6)-[(R)-dihydrolipoyl]-5'-AMP + diphosphate. The catalysed reaction is N(6)-[(R)-dihydrolipoyl]-5'-AMP + L-lysyl-[lipoyl-carrier protein] = N(6)-[(R)-dihydrolipoyl]-L-lysyl-[lipoyl-carrier protein] + AMP + 2 H(+). The protein operates within protein modification; protein lipoylation via exogenous pathway; protein N(6)-(lipoyl)lysine from lipoate: step 1/2. It functions in the pathway protein modification; protein lipoylation via exogenous pathway; protein N(6)-(lipoyl)lysine from lipoate: step 2/2. Its activity is regulated as follows. Inhibited by the lipoate analog 8-bromo-octanoate (BrO). Catalytic activity is increased in the presence of Mg(2+). Catalyzes both the ATP-dependent activation of exogenously supplied lipoate to lipoyl-AMP and the transfer of the activated lipoyl onto the lipoyl domains of lipoate-dependent enzymes. In the mitochondrion, functions as a redox switch between two lipoylation routes. Senses the oxidation state of lipoate and determines which downstream enzymes will be lipoylated. In low reducing conditions, uses lipoate in its oxidized ring form to lipoylate glycine cleavage system H-protein GCVH. In high reducing conditions and together with LipL2, uses reduced lipoate (dihydrolipoate) to lipoylate the E2 component of the branched chain alpha-ketoacid dehydrogenase complex BCKDH-E2/BCDH and the E2 component of the alpha-ketoglutarate dehydrogenase complex KDH. LipL1 is responsible for catalysing the activation of lipoate, forming lipoyl-AMP while LipL2 is required but is not capable of catalyzing this reaction. This is Lipoate--protein ligase 1 from Plasmodium falciparum (isolate 3D7).